A 469-amino-acid polypeptide reads, in one-letter code: Phenylalanine--tRNA ligase, mitochondrial (469 aa).

Residues 1 to 17 constitute a mitochondrion transit peptide; it reads MFLNRMMKTRTGLYRLY. Residues 126–129, Arg-155, 162–164, 169–171, Glu-302, and Phe-329 each bind substrate; these read SAHE, THY, and QME. The FDX-ACB domain maps to 372 to 469; it reads SKHPGSFRDV…LVKEYSVELR (98 aa).

It belongs to the class-II aminoacyl-tRNA synthetase family. As to quaternary structure, monomer.

Its subcellular location is the mitochondrion matrix. It catalyses the reaction tRNA(Phe) + L-phenylalanine + ATP = L-phenylalanyl-tRNA(Phe) + AMP + diphosphate + H(+). Its function is as follows. Is responsible for the charging of tRNA(Phe) with phenylalanine in mitochondrial translation. The chain is Phenylalanine--tRNA ligase, mitochondrial (MSF1) from Saccharomyces cerevisiae (strain ATCC 204508 / S288c) (Baker's yeast).